The following is an 864-amino-acid chain: Leukocyte tyrosine kinase receptor (864 aa).

An N-terminal signal peptide occupies residues 1 to 16; that stretch reads MGCWGQLLVWFGAAGA. At 17 to 424 the chain is on the extracellular side; the sequence is ILCSSPGSQE…CMDLHKPPGP (408 aa). The span at 30–40 shows a compositional bias: low complexity; that stretch reads RSSPLPLASPS. Residues 30-64 form a disordered region; that stretch reads RSSPLPLASPSPRDPKVSAPPSILEPASPLNSPGT. 2 disulfides stabilise this stretch: Cys-73–Cys-86 and Cys-168–Cys-179. A disordered region spans residues 239–297; it reads YLRPRDRGRTQASPEKLENRSEAPGSGGRGGAAGGGGGWTSRAPSPQAGRSLQEGAEGG. Positions 241-259 are enriched in basic and acidic residues; that stretch reads RPRDRGRTQASPEKLENRS. Asn-257 is a glycosylation site (N-linked (GlcNAc...) asparagine). Residues 263–277 show a composition bias toward gly residues; sequence GSGGRGGAAGGGGGW. Cysteines 300 and 322 form a disulfide. 2 N-linked (GlcNAc...) asparagine glycosylation sites follow: Asn-380 and Asn-412. A helical membrane pass occupies residues 425–449; it reads LVLMVAVVATSTLSLLMVCGVLILV. At 450–864 the chain is on the cytoplasmic side; it reads KQKKWQGLQE…QNLWNPTYRS (415 aa). The Protein kinase domain occupies 510–786; that stretch reads VTLLRALGHG…LQYCTQDPDV (277 aa). Residues 516–524 and Lys-544 contribute to the ATP site; that span reads LGHGAFGEV. The Proton acceptor role is filled by Asp-643. Residue Tyr-676 is modified to Phosphotyrosine; by autocatalysis. Disordered stretches follow at residues 790–830 and 842–864; these read LLPM…KLKS and SGLK…TYRS. The segment covering 852-864 has biased composition (polar residues); the sequence is LQPQNLWNPTYRS.

This sequence belongs to the protein kinase superfamily. Tyr protein kinase family. Insulin receptor subfamily. Homodimer; homodimerizes following ligand-binding. Part of a complex including LTK, TNK2 and GRB2, in which GRB2 promotes LTK recruitment by TNK2. In terms of processing, phosphorylated at tyrosine residues by autocatalysis, which activates kinase activity. In terms of tissue distribution, expressed in non-hematopoietic cell lines and T- and B-cell lines.

It is found in the cell membrane. It carries out the reaction L-tyrosyl-[protein] + ATP = O-phospho-L-tyrosyl-[protein] + ADP + H(+). Its activity is regulated as follows. Activated by ligand-binding, leading to homodimerization and autophosphorylation. Functionally, receptor with a tyrosine-protein kinase activity. Following activation by ALKAL1 or ALKAL2 ligands at the cell surface, transduces an extracellular signal into an intracellular response. Ligand-binding to the extracellular domain induces tyrosine kinase activation, leading to activation of the mitogen-activated protein kinase (MAPK) pathway. Phosphorylates almost exclusively at the first tyrosine of the Y-x-x-x-Y-Y motif. The exact function of this protein is not known; studies with chimeric proteins demonstrate its ability to promote growth and specifically neurite outgrowth, and cell survival. Involved in regulation of the secretory pathway involving endoplasmic reticulum (ER) export sites (ERESs) and ER to Golgi transport. This is Leukocyte tyrosine kinase receptor from Homo sapiens (Human).